A 109-amino-acid chain; its full sequence is Large ribosomal subunit protein bL19 (109 aa).

This sequence belongs to the bacterial ribosomal protein bL19 family.

Functionally, this protein is located at the 30S-50S ribosomal subunit interface and may play a role in the structure and function of the aminoacyl-tRNA binding site. The polypeptide is Large ribosomal subunit protein bL19 (Rubrobacter xylanophilus (strain DSM 9941 / JCM 11954 / NBRC 16129 / PRD-1)).